A 156-amino-acid polypeptide reads, in one-letter code: H/ACA ribonucleoprotein complex subunit NHP2 (156 aa).

The protein belongs to the eukaryotic ribosomal protein eL8 family. Component of the small nucleolar ribonucleoprotein particles containing H/ACA-type snoRNAs (H/ACA snoRNPs). The protein component of the H/ACA snoRNP contains CBF5, GAR1, NHP2 and NOP10. The complex contains a stable core composed of CBF5 and NOP10, to which GAR1 and NHP2 subsequently bind. Interacts with SHQ1. Interacts with NAF1.

Its subcellular location is the nucleus. The protein resides in the nucleolus. In terms of biological role, non-catalytic component of the H/ACA small nucleolar ribonucleoprotein (H/ACA snoRNP), which catalyzes pseudouridylation of rRNA and is required for ribosome biogenesis. This involves the isomerization of uridine such that the ribose is subsequently attached to C5, instead of the normal N1. Pseudouridine ('psi') residues may serve to stabilize the conformation of rRNAs. The H/ACA snoRNP complex also mediates pseudouridylation of other types of RNAs. The H/ACA snoRNP complex mediates pseudouridylation at position 93 in U2 snRNA. Essential for growth. Directly binds H/ACA snoRNAs. This Saccharomyces cerevisiae (strain ATCC 204508 / S288c) (Baker's yeast) protein is H/ACA ribonucleoprotein complex subunit NHP2 (NHP2).